The chain runs to 118 residues: UPF0102 protein Dtur_1530 (118 aa).

The protein belongs to the UPF0102 family.

The chain is UPF0102 protein Dtur_1530 from Dictyoglomus turgidum (strain DSM 6724 / Z-1310).